Reading from the N-terminus, the 64-residue chain is Prokaryotic ubiquitin-like protein Pup (64 aa).

The disordered stretch occupies residues 1-37; that stretch reads MAQEQTKRGGGGGDDEDVTGTTAAGQERREKLAQDTD. The interval 21–58 is ARC ATPase binding; the sequence is TTAAGQERREKLAQDTDDLLDEIDDVLEENAEDFVRAY. A coiled-coil region spans residues 25–52; the sequence is GQERREKLAQDTDDLLDEIDDVLEENAE. Gln-64 carries the deamidated glutamine modification. Gln-64 participates in a covalent cross-link: Isoglutamyl lysine isopeptide (Gln-Lys) (interchain with K-? in acceptor proteins).

The protein belongs to the prokaryotic ubiquitin-like protein family. In terms of assembly, strongly interacts with the proteasome-associated ATPase ARC through a hydrophobic interface; the interacting region of Pup lies in its C-terminal half. There is one Pup binding site per ARC hexamer ring. In terms of processing, is modified by deamidation of its C-terminal glutamine to glutamate by the deamidase Dop, a prerequisite to the subsequent pupylation process.

It functions in the pathway protein degradation; proteasomal Pup-dependent pathway. Protein modifier that is covalently attached to lysine residues of substrate proteins, thereby targeting them for proteasomal degradation. The tagging system is termed pupylation. The sequence is that of Prokaryotic ubiquitin-like protein Pup from Mycobacterium marinum (strain ATCC BAA-535 / M).